Here is a 727-residue protein sequence, read N- to C-terminus: Rho-related BTB domain-containing protein 2 (727 aa).

Residues Met1 to Ser210 form a rho-like region. Residues Gly21–Thr28, Asp84–Asp88, and Cys140–Asp143 contribute to the GTP site. 2 BTB domains span residues Ala266–Glu442 and Ser500–Pro567. The segment at Glu304–His333 is disordered. Positions His315–Asp324 are enriched in basic and acidic residues. The disordered stretch occupies residues Phe703 to Val727. Residues Ser706–Val727 show a composition bias toward low complexity.

The protein belongs to the small GTPase superfamily. Rho family. As to quaternary structure, interacts with HSP90AA1 and HSP90AB1. Forms a complex with CUL3 and RBX1. Interacts (via BTB 1 domain) with CUL3. Interacts with MSI2. In terms of processing, autoubiquitinated by RHOBTB2-CUL3-RBX1 ubiquitin ligase complex. As to expression, ubiquitous, with highest levels in neural tissues. Expression is also detected in fetal lung, heart, and brain.

Functionally, regulator of cell proliferation and apoptosis. It likely functions as a substrate-adapter that recruits key substrates, e.g. MSI2, to CUL3-based ubiquitin ligase complexes for degradation. Required for MSI2 ubiquitination and degradation. The polypeptide is Rho-related BTB domain-containing protein 2 (RHOBTB2) (Homo sapiens (Human)).